We begin with the raw amino-acid sequence, 433 residues long: Tol-Pal system protein TolB (433 aa).

The N-terminal stretch at 1-26 is a signal peptide; that stretch reads MSLMTKLGFRALVASCLIAAGGAAHA.

Belongs to the TolB family. In terms of assembly, the Tol-Pal system is composed of five core proteins: the inner membrane proteins TolA, TolQ and TolR, the periplasmic protein TolB and the outer membrane protein Pal. They form a network linking the inner and outer membranes and the peptidoglycan layer.

It localises to the periplasm. In terms of biological role, part of the Tol-Pal system, which plays a role in outer membrane invagination during cell division and is important for maintaining outer membrane integrity. The polypeptide is Tol-Pal system protein TolB (Burkholderia thailandensis (strain ATCC 700388 / DSM 13276 / CCUG 48851 / CIP 106301 / E264)).